The sequence spans 439 residues: Xylose isomerase (439 aa).

Residues His-99 and Asp-102 contribute to the active site. Mg(2+)-binding residues include Glu-230, Glu-266, His-269, Asp-294, Asp-305, Asp-307, and Asp-337.

The protein belongs to the xylose isomerase family. In terms of assembly, homotetramer. Requires Mg(2+) as cofactor.

The protein localises to the cytoplasm. It carries out the reaction alpha-D-xylose = alpha-D-xylulofuranose. This Oceanobacillus iheyensis (strain DSM 14371 / CIP 107618 / JCM 11309 / KCTC 3954 / HTE831) protein is Xylose isomerase.